Consider the following 973-residue polypeptide: EF-hand calcium-binding domain-containing protein 13 (973 aa).

The disordered stretch occupies residues 384-448; that stretch reads YSKNGINFKK…HSSLQKQVSS (65 aa). Positions 396-405 are enriched in basic and acidic residues; sequence EKGEIHDSKS. Residues 406-418 are compositionally biased toward low complexity; sequence KPQSLKSSTSLSK. 6 EF-hand domains span residues 488 to 523, 524 to 559, 633 to 668, 756 to 791, 792 to 827, and 864 to 899; these read LLDE…ERSF, PECN…FGIY, LKKD…MRDA, PKVN…LNVN, LTEE…SPHF, and TANA…ILTI.

This Homo sapiens (Human) protein is EF-hand calcium-binding domain-containing protein 13 (EFCAB13).